We begin with the raw amino-acid sequence, 506 residues long: 2-isopropylmalate synthase (506 aa).

Positions 4-266 constitute a Pyruvate carboxyltransferase domain; that stretch reads ILFMDTTLRD…EPSMTLKEIK (263 aa). 4 residues coordinate Mn(2+): D13, H201, H203, and N237. The tract at residues 390 to 506 is regulatory domain; that stretch reads NITQLQVHFV…KLKSFIQLVK (117 aa).

Belongs to the alpha-IPM synthase/homocitrate synthase family. LeuA type 1 subfamily. As to quaternary structure, homodimer. Mn(2+) is required as a cofactor.

The protein resides in the cytoplasm. It catalyses the reaction 3-methyl-2-oxobutanoate + acetyl-CoA + H2O = (2S)-2-isopropylmalate + CoA + H(+). It functions in the pathway amino-acid biosynthesis; L-leucine biosynthesis; L-leucine from 3-methyl-2-oxobutanoate: step 1/4. In terms of biological role, catalyzes the condensation of the acetyl group of acetyl-CoA with 3-methyl-2-oxobutanoate (2-ketoisovalerate) to form 3-carboxy-3-hydroxy-4-methylpentanoate (2-isopropylmalate). The chain is 2-isopropylmalate synthase from Bacillus anthracis (strain A0248).